A 683-amino-acid chain; its full sequence is MEEERVDSSKRLFRGIVADLRGRALCYKEDWVAGLRSGFGILAPTTYIFFASALPVIAFGEQLSRDTEGALSTVETLASTALCGVIHSILGGQPLLILGVAEPTVLMYVYLYNFAIGRPELGKQLYLAWAAWVCVWTALLLFVMAILNTADIINRFTRVAGELFGMLISVLFIQQAIKGMVSEFGMPKDEDSKLEKYKFEWLYTNGLLGLIFTFGLLYTALKSRKARSWRYGTGWYRSFIADYGVPLMVVVWTALSFSTPSKLPSGVPRRLFSPLPWDSPSLSHWTVIKDMGKVSPGYIFAAFIPALMIAGLYFFDHSVASQLAQQKEFNLKKPSAYHYDILLLGFMTLICGLLGLPPSNGVLPQSPMHTKSLAVLKRQLIRRKMVKTAKESIRKRETSSQVYENMQEVFIEMDKSPLAQTDPSVIIELQDLKEAVMKSNDEEREGDEESGFDPEKHLDAYLPVRVNEQRVSNLLQSLLVAGAVLAMPAIKLIPTSILWGYFAYMAIDSLPGNQFFERLTLLFVPTSRRFKVLEGAHASFVEKVPYKSMAAFTLLQIFYFGLCYGVTWIPVAGIMFPVPFFLLIAIRQYILPKLFNPAHLRELDAAEYEEIPGTPRNPLELSFRSNDSKRGVQEGDAEILDELTTSRGELKVRTLNLNEDKGNQIYPKEKVKAGDGDMSTTRE.

The Cytoplasmic segment spans residues 1-38 (MEEERVDSSKRLFRGIVADLRGRALCYKEDWVAGLRSG). A helical transmembrane segment spans residues 39–59 (FGILAPTTYIFFASALPVIAF). Residues 60 to 80 (GEQLSRDTEGALSTVETLAST) are Extracellular-facing. The chain crosses the membrane as a helical span at residues 81 to 101 (ALCGVIHSILGGQPLLILGVA). Residues 102–126 (EPTVLMYVYLYNFAIGRPELGKQLY) lie on the Cytoplasmic side of the membrane. Residues 127–147 (LAWAAWVCVWTALLLFVMAIL) form a helical membrane-spanning segment. Topologically, residues 148–160 (NTADIINRFTRVA) are extracellular. The chain crosses the membrane as a helical span at residues 161 to 181 (GELFGMLISVLFIQQAIKGMV). At 182-200 (SEFGMPKDEDSKLEKYKFE) the chain is on the cytoplasmic side. The chain crosses the membrane as a helical span at residues 201–221 (WLYTNGLLGLIFTFGLLYTAL). Residues 222–238 (KSRKARSWRYGTGWYRS) are Extracellular-facing. The chain crosses the membrane as a helical span at residues 239–259 (FIADYGVPLMVVVWTALSFST). The Cytoplasmic portion of the chain corresponds to 260–294 (PSKLPSGVPRRLFSPLPWDSPSLSHWTVIKDMGKV). Residues 295 to 315 (SPGYIFAAFIPALMIAGLYFF) traverse the membrane as a helical segment. Residues 316–335 (DHSVASQLAQQKEFNLKKPS) are Extracellular-facing. A helical membrane pass occupies residues 336–356 (AYHYDILLLGFMTLICGLLGL). Residues 357–477 (PPSNGVLPQS…EQRVSNLLQS (121 aa)) are Cytoplasmic-facing. A helical membrane pass occupies residues 478–498 (LLVAGAVLAMPAIKLIPTSIL). Residues 499–565 (WGYFAYMAID…QIFYFGLCYG (67 aa)) lie on the Extracellular side of the membrane. The chain crosses the membrane as a helical span at residues 566–586 (VTWIPVAGIMFPVPFFLLIAI). At 587 to 683 (RQYILPKLFN…GDGDMSTTRE (97 aa)) the chain is on the cytoplasmic side. Disordered regions lie at residues 617 to 638 (NPLE…GDAE) and 661 to 683 (KGNQ…TTRE).

Belongs to the anion exchanger (TC 2.A.31.3) family. As to expression, expressed in the distal sides of epidermal cells in the elongation zone of roots.

The protein resides in the membrane. Its function is as follows. Efflux-type boron transporter polarly localized in roots. Boron is essential for maintaining the integrity of plants cell walls. In Arabidopsis thaliana (Mouse-ear cress), this protein is Boron transporter 4 (BOR4).